Consider the following 212-residue polypeptide: Imidazole glycerol phosphate synthase subunit HisH (212 aa).

Positions 3–212 (DVAIIDYGMG…MLANFISWAP (210 aa)) constitute a Glutamine amidotransferase type-1 domain. Catalysis depends on C82, which acts as the Nucleophile. Residues H192 and E194 contribute to the active site.

As to quaternary structure, heterodimer of HisH and HisF.

It localises to the cytoplasm. It carries out the reaction 5-[(5-phospho-1-deoxy-D-ribulos-1-ylimino)methylamino]-1-(5-phospho-beta-D-ribosyl)imidazole-4-carboxamide + L-glutamine = D-erythro-1-(imidazol-4-yl)glycerol 3-phosphate + 5-amino-1-(5-phospho-beta-D-ribosyl)imidazole-4-carboxamide + L-glutamate + H(+). The catalysed reaction is L-glutamine + H2O = L-glutamate + NH4(+). It participates in amino-acid biosynthesis; L-histidine biosynthesis; L-histidine from 5-phospho-alpha-D-ribose 1-diphosphate: step 5/9. IGPS catalyzes the conversion of PRFAR and glutamine to IGP, AICAR and glutamate. The HisH subunit catalyzes the hydrolysis of glutamine to glutamate and ammonia as part of the synthesis of IGP and AICAR. The resulting ammonia molecule is channeled to the active site of HisF. The polypeptide is Imidazole glycerol phosphate synthase subunit HisH (Aromatoleum aromaticum (strain DSM 19018 / LMG 30748 / EbN1) (Azoarcus sp. (strain EbN1))).